Here is a 569-residue protein sequence, read N- to C-terminus: Cytochrome P450 monooxygenase abl1 (569 aa).

Residue Cys464 participates in heme binding.

Belongs to the cytochrome P450 family. Heme serves as cofactor.

It participates in hormone biosynthesis. Its function is as follows. Cytochrome P450 monooxygenase; part of the gene cluster that mediates the biosynthesis of abscisic acid (ABA), a phytohormone that acts antagonistically toward salicylic acid (SA), jasmonic acid (JA) and ethylene (ETH) signaling, to impede plant defense responses. The first step of the pathway catalyzes the reaction from farnesyl diphosphate to alpha-ionylideneethane performed by the alpha-ionylideneethane synthase abl3 via a three-step reaction mechanism involving 2 neutral intermediates, beta-farnesene and allofarnesene. The cytochrome P450 monooxygenase abl1 might then be involved in the conversion of alpha-ionylideneethane to alpha-ionylideneacetic acid. Alpha-ionylideneacetic acid is further converted to abscisic acid in 2 steps involving the cytochrome P450 monooxygenase abl2 and the short-chain dehydrogenase/reductase abl4, via the intermediates 1'-deoxy-ABA or 1',4'-trans-diol-ABA, depending on the order of action of these 2 enzymes. Abl2 is responsible for the hydroxylation of carbon atom C-1' and abl4 might be involved in the oxidation of the C-4' carbon atom. This chain is Cytochrome P450 monooxygenase abl1, found in Leptosphaeria maculans (strain JN3 / isolate v23.1.3 / race Av1-4-5-6-7-8) (Blackleg fungus).